A 367-amino-acid polypeptide reads, in one-letter code: Female-specific protein transformer (367 aa).

The tract at residues 86–280 (ESISSKKIKS…HRHHRSQERS (195 aa)) is disordered. The segment covering 109 to 129 (VKQNSPDVTQKFTKKYGSSEN) has biased composition (polar residues). Basic and acidic residues predominate over residues 130–144 (PDFRRHSSYEKDNYH). The span at 195 to 223 (NRRRSSHRSRRGSGSPRSRRYTSRHRRRS) shows a compositional bias: basic residues. Residues 229 to 238 (TSWKHNPEHR) show a composition bias toward basic and acidic residues. Over residues 239–257 (TSRRSRTRSPRGNRSRRRS) the composition is skewed to basic residues.

Sex differentiation protein controlling female somatic sexual differentiation. May act by promoting the formation of a splicing enhancer complex. The polypeptide is Female-specific protein transformer (Musca domestica (House fly)).